The chain runs to 833 residues: Piwi-like protein 2 (833 aa).

One can recognise a PAZ domain in the interval 227–353 (RINRVLNDNS…IPGELCFLCG (127 aa)). Positions 313-338 (PMRRERKKKDEEGVEKEKEKEAPEEK) are disordered. Over residues 320-338 (KKDEEGVEKEKEKEAPEEK) the composition is skewed to basic and acidic residues. A Piwi domain is found at 515 to 815 (KMALVFVPDD…LAELVGKVHK (301 aa)).

The protein belongs to the argonaute family. Piwi subfamily. As to expression, expressed in dividing adult stem cells.

Required for the production of functional progeny from adult somatic stem cells (neoblasts). This Schmidtea mediterranea (Freshwater planarian flatworm) protein is Piwi-like protein 2 (wi-2).